The primary structure comprises 374 residues: Protein TAB2 homolog, chloroplastic (374 aa).

Residues 1 to 64 constitute a chloroplast transit peptide; the sequence is MATLGFNTRR…SLSITKEQEV (64 aa). The tract at residues 58 to 84 is disordered; that stretch reads ITKEQEVANEVEEDDPTSELSYLDPES. Positions 64 to 74 are enriched in acidic residues; that stretch reads VANEVEEDDPT.

The protein resides in the plastid. It is found in the chloroplast. Nuclear genome-encoded A/U-rich RNA-binding protein involved in the biogenesis of photosystem I (PSI) and II (PSII). Required for the light-controlled accumulation of PSI and PSII during early plant development. Does not seem to be required for the translation of mRNAs of the PSI subunits. This chain is Protein TAB2 homolog, chloroplastic, found in Arabidopsis thaliana (Mouse-ear cress).